The sequence spans 90 residues: Putative beta-neurotoxin RjAa14F (90 aa).

An N-terminal signal peptide occupies residues 1-18 (MKILIFIIASFMLIGVEC). In terms of domain architecture, LCN-type CS-alpha/beta spans 19-89 (KEGYPTNSEG…VWDPNNNKCV (71 aa)). 4 disulfides stabilise this stretch: Cys-29/Cys-88, Cys-33/Cys-62, Cys-40/Cys-69, and Cys-44/Cys-71.

This sequence belongs to the long (4 C-C) scorpion toxin superfamily. Sodium channel inhibitor family. Beta subfamily. In terms of tissue distribution, expressed by the venom gland.

It localises to the secreted. Its function is as follows. Beta toxins bind voltage-independently at site-4 of sodium channels (Nav) and shift the voltage of activation toward more negative potentials thereby affecting sodium channel activation and promoting spontaneous and repetitive firing. The chain is Putative beta-neurotoxin RjAa14F from Rhopalurus junceus (Caribbean blue scorpion).